The sequence spans 440 residues: MSSNTHHWIARRGTALQGSLAIPGDKSVSHRAVMFAALADGVSQIDGFLEGEDTRSTAAIFAKLGVRIETPSASQRIVHGVGVDGLQPPTGALDCGNAGTGMRLLAGLLAAQRFDSVLVGDESLSKRPMRRVTGPLAQMGARIDTQDDGTPPLRVHGGQALHGIDFVSPVASAQVKSAVLLAGLYAQGETSVTEPHPTRDYSERMLSAFGVDIDFSPGSARLRGGQRLRATDIAVPADFSSAAFFIVAASIVPDSEVVLRAVGLNPRRTGLLAALRLMGADISEENHAEHGGEPVADLRVRYAPLRGAQIPEALVPDMIDEFPALFVAATAASGQTVVTGAAELRVKESDRLAAMATGLRTLGVQVDETPDGATIHGGSIGSGVIESHGDHRIAMAFAIAGQLSSGSVRVNDVANVATSFPGFDTLAQGAGFGLEAAESG.

Positions 26, 27, and 31 each coordinate 3-phosphoshikimate. Lysine 26 serves as a coordination point for phosphoenolpyruvate. Residues glycine 99 and arginine 127 each coordinate phosphoenolpyruvate. Serine 172, glutamine 174, aspartate 320, and lysine 347 together coordinate 3-phosphoshikimate. Position 174 (glutamine 174) interacts with phosphoenolpyruvate. The Proton acceptor role is filled by aspartate 320. 2 residues coordinate phosphoenolpyruvate: arginine 351 and arginine 392.

It belongs to the EPSP synthase family. In terms of assembly, monomer.

It localises to the cytoplasm. The enzyme catalyses 3-phosphoshikimate + phosphoenolpyruvate = 5-O-(1-carboxyvinyl)-3-phosphoshikimate + phosphate. Its pathway is metabolic intermediate biosynthesis; chorismate biosynthesis; chorismate from D-erythrose 4-phosphate and phosphoenolpyruvate: step 6/7. In terms of biological role, catalyzes the transfer of the enolpyruvyl moiety of phosphoenolpyruvate (PEP) to the 5-hydroxyl of shikimate-3-phosphate (S3P) to produce enolpyruvyl shikimate-3-phosphate and inorganic phosphate. The polypeptide is 3-phosphoshikimate 1-carboxyvinyltransferase (Xanthomonas oryzae pv. oryzae (strain MAFF 311018)).